Here is a 108-residue protein sequence, read N- to C-terminus: Nucleoid-associated protein BP1550 (108 aa).

Residues 87–108 (SQEKMASVTAGMPLPPGMKLPF) form a disordered region. Over residues 99–108 (PLPPGMKLPF) the composition is skewed to pro residues.

It belongs to the YbaB/EbfC family. As to quaternary structure, homodimer.

It is found in the cytoplasm. Its subcellular location is the nucleoid. In terms of biological role, binds to DNA and alters its conformation. May be involved in regulation of gene expression, nucleoid organization and DNA protection. This is Nucleoid-associated protein BP1550 from Bordetella pertussis (strain Tohama I / ATCC BAA-589 / NCTC 13251).